The chain runs to 607 residues: Oligoendopeptidase F homolog (607 aa).

Residue H384 coordinates Zn(2+). E385 is a catalytic residue. Residues H388 and H391 each contribute to the Zn(2+) site.

The protein belongs to the peptidase M3B family. The cofactor is Zn(2+).

This chain is Oligoendopeptidase F homolog (pepF), found in Mycoplasma genitalium (strain ATCC 33530 / DSM 19775 / NCTC 10195 / G37) (Mycoplasmoides genitalium).